The sequence spans 554 residues: Phenylalanine--tRNA ligase beta subunit (554 aa).

Residues 276–351 form the B5 domain; it reads LTPRYREISI…KNHGYEKFEG (76 aa). Residues aspartate 329, aspartate 335, glutamate 338, and glutamate 339 each contribute to the Mg(2+) site.

It belongs to the phenylalanyl-tRNA synthetase beta subunit family. Type 2 subfamily. As to quaternary structure, tetramer of two alpha and two beta subunits. It depends on Mg(2+) as a cofactor.

It localises to the cytoplasm. It carries out the reaction tRNA(Phe) + L-phenylalanine + ATP = L-phenylalanyl-tRNA(Phe) + AMP + diphosphate + H(+). The sequence is that of Phenylalanine--tRNA ligase beta subunit from Methanococcus vannielii (strain ATCC 35089 / DSM 1224 / JCM 13029 / OCM 148 / SB).